Here is a 259-residue protein sequence, read N- to C-terminus: MPRSFLVKKHFSASKKPNYSELESQTVYISPFIYDKFPVIPQPEILSTGAYYTPLVWDTGLLTTFFTSESDYKKSPISPSSSDDSSKPLDLTSFSSEDEGGKTSDPPSPASSATEAEKFQCNLCSKSYSTFAGLSKHKQLHCDSQTRKSFSCKYCEKEYVSLGALKMHIRSHTLPCVCKICGKAFSRPWLLQGHIRTHTGEKPFSCTHCNRAFADRSNLRAHLQTHSDVKKYQCKSCSRTFSRMSLLHKHEETGCTVAH.

The tract at residues 1–20 is SNAG domain; that stretch reads MPRSFLVKKHFSASKKPNYS. The segment at 71–113 is disordered; sequence DYKKSPISPSSSDDSSKPLDLTSFSSEDEGGKTSDPPSPASSA. C2H2-type zinc fingers lie at residues 119-141, 150-172, 176-198, 204-226, and 232-255; these read FQCN…KQLH, FSCK…IRSH, CVCK…IRTH, FSCT…LQTH, and YQCK…ETGC.

The protein belongs to the snail C2H2-type zinc-finger protein family. In terms of assembly, interacts (via SNAG domain) with limd1 (via LIM domains), wtip (via LIM domains) and ajuba (via LIM domains). Interacts with elp3; the interaction inhibits snai1 ubiquitination and promotes snai1 stability. Post-translationally, ubiquitinated. Maternal expression is nearly completely restricted to the vegetal hemisphere. Zygotic expression begins in the dorsal marginal zone just before gastrulation (stage 9), and is almost completely absent in the animal hemisphere. At mid-gastrula (stage 11-11.5), expression begins in the ectoderm in an arc surrounding the prospective neural plate. From stage 12, anterior expression is down-regulated, while levels are increased in the prospective neural crest.

It localises to the nucleus. Its function is as follows. Transcriptional repressor. Acts upstream of snai2/slug, zic5 and other neural crest markers in the specification of the neural crest and neural crest migration. Involved in embryonic mesoderm formation. The polypeptide is Protein snail homolog Sna (snai1) (Xenopus laevis (African clawed frog)).